Consider the following 269-residue polypeptide: CUE domain-containing protein 2-B (269 aa).

Residues 110–130 (ASPSEKTATEPLEGAVAQDKD) form a disordered region. A CUE domain is found at 131–174 (DPKTGVDLLLEIFPSCTITQAQTALSMAKGDLEDAVQIIVDGKV).

This sequence belongs to the CUEDC2 family. In terms of processing, phosphorylated.

Its subcellular location is the cytoplasm. The protein resides in the nucleus. Its function is as follows. May play a role in targeting proteins for ubiquitination and subsequent proteasomal degradation. This chain is CUE domain-containing protein 2-B (cuedc2-b), found in Xenopus laevis (African clawed frog).